Here is a 1732-residue protein sequence, read N- to C-terminus: Serine/threonine-protein kinase MRCK alpha (1732 aa).

The Protein kinase domain maps to 77–343 (FEILKVIGRG…IEDFKKHPFF (267 aa)). ATP is bound by residues 83-91 (IGRGAFGEV) and Lys106. Catalysis depends on Asp201, which acts as the Proton acceptor. A phosphoserine; by autocatalysis mark is found at Ser222 and Ser234. Position 240 is a phosphothreonine; by autocatalysis (Thr240). Residues 344 to 414 (SGIDWDNIRN…TSSCVLSDRS (71 aa)) form the AGC-kinase C-terminal domain. 2 coiled-coil regions span residues 437-820 (NNLA…WEAQ) and 880-943 (LELQ…SEKG). Residues 968-1003 (ERSPSCTPASKGRRTVDSTPLSVHTPTLRKKGCPGS) are disordered. Residues 1012–1062 (THQFFVKSFTTPTKCHQCTSLMVGLIRQGCSCEVCGFSCHITCVNKAPTTC) form a Phorbol-ester/DAG-type zinc finger. A PH domain is found at 1082-1201 (GTAYEGHVRI…WVGVLSELHK (120 aa)). Phosphoserine is present on Ser1127. In terms of domain architecture, CNH spans 1227–1499 (IKTTQAAAII…RPLNNEGSLN (273 aa)). Position 1545 is a phosphoserine (Ser1545). One can recognise a CRIB domain in the interval 1571-1584 (ISNPTNFNHIAHMG). The disordered stretch occupies residues 1591–1732 (ILKDLPMNPR…ESTDRGSWDP (142 aa)). Over residues 1604 to 1619 (SRTVFSGSVSIPSITK) the composition is skewed to polar residues. Ser1611, Ser1613, Ser1629, Ser1651, Ser1664, Ser1669, and Ser1693 each carry phosphoserine. A compositionally biased stretch (low complexity) spans 1625 to 1640 (GRSMSASSGLSARSSA). Low complexity predominate over residues 1665-1674 (PSEGSLSSGG). Over residues 1697-1707 (STASNSSNLSS) the composition is skewed to low complexity. 2 positions are modified to phosphoserine: Ser1719 and Ser1721.

This sequence belongs to the protein kinase superfamily. AGC Ser/Thr protein kinase family. DMPK subfamily. Homodimer and homotetramer via the coiled coil regions. Interacts tightly with GTP-bound but not GDP-bound CDC42. Forms a tripartite complex with MYO18A and LURAP1 with the latter acting as an adapter connecting CDC42BPA and MYO18A. LURAP1 binding results in activation of CDC42BPA by abolition of its negative autoregulation. Interacts with LURAP1. Interacts (via AGC-kinase C-terminal domain) with FAM89B/LRAP25 (via LRR repeat). Forms a tripartite complex with FAM89B/LRAP25 and LIMK1. Requires Mg(2+) as cofactor. Proteolytically cleaved by caspases upon apoptosis induction. The cleavage at Asp-478 by CASP3 increases its kinase activity (in vitro). Abundant in the heart, brain, skeletal muscle, kidney, and pancreas, with little or no expression in the lung and liver.

It localises to the cytoplasm. The protein localises to the cell projection. Its subcellular location is the lamellipodium. The catalysed reaction is L-seryl-[protein] + ATP = O-phospho-L-seryl-[protein] + ADP + H(+). The enzyme catalyses L-threonyl-[protein] + ATP = O-phospho-L-threonyl-[protein] + ADP + H(+). With respect to regulation, maintained in an inactive, closed conformation by an interaction between the kinase domain and the negative autoregulatory C-terminal coiled-coil region. Agonist binding to the phorbol ester binding site disrupts this, releasing the kinase domain to allow N-terminus-mediated dimerization and kinase activation by transautophosphorylation. Inhibited by chelerythrine chloride. Functionally, serine/threonine-protein kinase which is an important downstream effector of CDC42 and plays a role in the regulation of cytoskeleton reorganization and cell migration. Regulates actin cytoskeletal reorganization via phosphorylation of PPP1R12C and MYL9/MLC2. In concert with MYO18A and LURAP1, is involved in modulating lamellar actomyosin retrograde flow that is crucial to cell protrusion and migration. Phosphorylates: PPP1R12A, LIMK1 and LIMK2. May play a role in TFRC-mediated iron uptake. In concert with FAM89B/LRAP25 mediates the targeting of LIMK1 to the lamellipodium resulting in its activation and subsequent phosphorylation of CFL1 which is important for lamellipodial F-actin regulation. Triggers the formation of an extrusion apical actin ring required for epithelial extrusion of apoptotic cells. The protein is Serine/threonine-protein kinase MRCK alpha of Homo sapiens (Human).